Here is a 127-residue protein sequence, read N- to C-terminus: UPF0102 protein Cpha266_0037 (127 aa).

This sequence belongs to the UPF0102 family.

This Chlorobium phaeobacteroides (strain DSM 266 / SMG 266 / 2430) protein is UPF0102 protein Cpha266_0037.